The sequence spans 410 residues: MSLREEALHLHKVNQGKLESKSKVEVRNAKDLSLAYSPGVAEPCKDIHEDINKVYDYTMKGNMVAVVTDGTAVLGLGNIGPEAALPVMEGKAVLFKSFAGVDAFPIALNTNDVDKIVETVKLLEPTFGGVNLEDIAAPNCFIIEERLKKETNIPVFHDDQHGTAIVTVAGLVNALKLSGKSMSSIKVVANGAGAAGIAIIKLLHHYGVRDIVMCDSKGAIYEGRPNGMNDVKNEVAKFTNQDRKDGSLKDVIVDADVFIGVSVAGALTKEMVQSMAKDPIIFAMANPNPEIMPEDAREAGASVVGTGRSDFPNQVNNVLAFPGIFRGALDVRATHINEEMKIAAVEAIASLVSEDELSADYVIPAPFDKRVAPAVAKAVAKAAMETGVARITVDPEEVAEKTRKLTIIGE.

Catalysis depends on tyrosine 36, which acts as the Proton donor. Lysine 91 acts as the Proton acceptor in catalysis. A divalent metal cation-binding residues include glutamate 133, aspartate 134, and aspartate 159. Residues 192–195 (AGAA), asparagine 286, and asparagine 317 each bind NADP(+).

Belongs to the malic enzymes family. In terms of assembly, interacts with BrxC. Mg(2+) serves as cofactor. It depends on Mn(2+) as a cofactor.

It carries out the reaction (S)-malate + NADP(+) = pyruvate + CO2 + NADPH. The catalysed reaction is oxaloacetate + H(+) = pyruvate + CO2. It catalyses the reaction (S)-malate + H(+) = (S)-lactate + CO2. NADPH is a strong modulator that switches activity from a pyruvate-producing malic enzyme to a lactate-generating malolactic enzyme. Functionally, bifunctional enzyme with both malic and malolactic enzyme activities. In the absence of NADPH, catalyzes the reversible decarboxylation of malate to pyruvate. Can use NAD and NADP, but with a very strong preference for NADP. In the presence of excess NADPH, catalyzes the non-oxidative decarboxylation of malate to lactate. During growth on glucose, contributes to NADPH balancing via oxidation of the NADPH produced in excess by other enzymatic reactions. Can also catalyze the decarboxylation of oxaloacetate. In Bacillus subtilis (strain 168), this protein is Bifunctional malic/malolactic enzyme (ytsJ).